The primary structure comprises 237 residues: Leucyl/phenylalanyl-tRNA--protein transferase (237 aa).

Belongs to the L/F-transferase family.

The protein resides in the cytoplasm. The enzyme catalyses N-terminal L-lysyl-[protein] + L-leucyl-tRNA(Leu) = N-terminal L-leucyl-L-lysyl-[protein] + tRNA(Leu) + H(+). The catalysed reaction is N-terminal L-arginyl-[protein] + L-leucyl-tRNA(Leu) = N-terminal L-leucyl-L-arginyl-[protein] + tRNA(Leu) + H(+). It carries out the reaction L-phenylalanyl-tRNA(Phe) + an N-terminal L-alpha-aminoacyl-[protein] = an N-terminal L-phenylalanyl-L-alpha-aminoacyl-[protein] + tRNA(Phe). In terms of biological role, functions in the N-end rule pathway of protein degradation where it conjugates Leu, Phe and, less efficiently, Met from aminoacyl-tRNAs to the N-termini of proteins containing an N-terminal arginine or lysine. The chain is Leucyl/phenylalanyl-tRNA--protein transferase from Shewanella baltica (strain OS223).